A 571-amino-acid polypeptide reads, in one-letter code: Proline--tRNA ligase (571 aa).

The protein belongs to the class-II aminoacyl-tRNA synthetase family. ProS type 1 subfamily. As to quaternary structure, homodimer.

It localises to the cytoplasm. It catalyses the reaction tRNA(Pro) + L-proline + ATP = L-prolyl-tRNA(Pro) + AMP + diphosphate. Its function is as follows. Catalyzes the attachment of proline to tRNA(Pro) in a two-step reaction: proline is first activated by ATP to form Pro-AMP and then transferred to the acceptor end of tRNA(Pro). As ProRS can inadvertently accommodate and process non-cognate amino acids such as alanine and cysteine, to avoid such errors it has two additional distinct editing activities against alanine. One activity is designated as 'pretransfer' editing and involves the tRNA(Pro)-independent hydrolysis of activated Ala-AMP. The other activity is designated 'posttransfer' editing and involves deacylation of mischarged Ala-tRNA(Pro). The misacylated Cys-tRNA(Pro) is not edited by ProRS. This is Proline--tRNA ligase from Pediococcus pentosaceus (strain ATCC 25745 / CCUG 21536 / LMG 10740 / 183-1w).